The chain runs to 359 residues: MAP kinase-activated protein kinase 2 (359 aa).

Positions 20–281 (VTSNTVLGYG…IQDVISNKWI (262 aa)) constitute a Protein kinase domain. ATP-binding positions include 26-34 (LGYGINGKV) and Lys49. Asp142 serves as the catalytic Proton acceptor.

The protein belongs to the protein kinase superfamily. CAMK Ser/Thr protein kinase family. Post-translationally, phosphorylated and activated by MAP kinase.

The catalysed reaction is L-seryl-[protein] + ATP = O-phospho-L-seryl-[protein] + ADP + H(+). It catalyses the reaction L-threonyl-[protein] + ATP = O-phospho-L-threonyl-[protein] + ADP + H(+). Its physiological substrate seems to be the small heat shock protein (HSP27/HSP25). This is MAP kinase-activated protein kinase 2 (MAPk-Ak2) from Drosophila melanogaster (Fruit fly).